The primary structure comprises 753 residues: Neuroendocrine convertase 1 (753 aa).

A signal peptide spans 1–27 (MEQRGWTLQCTAFAFFCVWCALNSVKA). Positions 28 to 110 (KRQFVNEWAA…QQYEKERSKR (83 aa)) are excised as a propeptide. Positions 129–450 (QWYLQDTRMT…FGLLNAKALV (322 aa)) constitute a Peptidase S8 domain. Residues D167 and H208 each act as charge relay system in the active site. Intrachain disulfides connect C225/C374 and C317/C347. S382 functions as the Charge relay system in the catalytic mechanism. The N-linked (GlcNAc...) asparagine glycan is linked to N401. The P/Homo B domain occupies 460 to 597 (NVPEKKECVV…KLILHGTSSQ (138 aa)). C467 and C494 are oxidised to a cystine. Residues 633–651 (QKSLNGNLLVPKNSSSSNV) show a composition bias toward polar residues. Residues 633–663 (QKSLNGNLLVPKNSSSSNVEGRRDEQVQGTP) are disordered. N-linked (GlcNAc...) asparagine glycosylation occurs at N645.

It belongs to the peptidase S8 family. Furin subfamily. Ca(2+) serves as cofactor.

Its subcellular location is the cytoplasmic vesicle. It is found in the secretory vesicle. It carries out the reaction Release of protein hormones, neuropeptides and renin from their precursors, generally by hydrolysis of -Lys-Arg-|- bonds.. Functionally, involved in the processing of hormone and other protein precursors at sites comprised of pairs of basic amino acid residues. Substrates include POMC, renin, enkephalin, dynorphin, somatostatin, insulin and AGRP. This Mus musculus (Mouse) protein is Neuroendocrine convertase 1 (Pcsk1).